The sequence spans 348 residues: Fructose-1,6-bisphosphatase class 1 (348 aa).

Residues Glu-104, Asp-126, Leu-128, and Asp-129 each coordinate Mg(2+). Residues 129 to 132 (DGSS), Asn-221, Tyr-249, and Lys-279 contribute to the substrate site. Glu-285 serves as a coordination point for Mg(2+).

It belongs to the FBPase class 1 family. In terms of assembly, homotetramer. Mg(2+) is required as a cofactor.

It is found in the cytoplasm. It catalyses the reaction beta-D-fructose 1,6-bisphosphate + H2O = beta-D-fructose 6-phosphate + phosphate. Its pathway is carbohydrate biosynthesis; Calvin cycle. This is Fructose-1,6-bisphosphatase class 1 from Thermosynechococcus vestitus (strain NIES-2133 / IAM M-273 / BP-1).